Reading from the N-terminus, the 704-residue chain is Elongation factor G (704 aa).

A tr-type G domain is found at 8–291 (DKVRNIGIMA…AVIDYLASPV (284 aa)). Residues 17-24 (AHIDAGKT), 90-94 (DTPGH), and 144-147 (NKMD) each bind GTP.

It belongs to the TRAFAC class translation factor GTPase superfamily. Classic translation factor GTPase family. EF-G/EF-2 subfamily.

The protein resides in the cytoplasm. Catalyzes the GTP-dependent ribosomal translocation step during translation elongation. During this step, the ribosome changes from the pre-translocational (PRE) to the post-translocational (POST) state as the newly formed A-site-bound peptidyl-tRNA and P-site-bound deacylated tRNA move to the P and E sites, respectively. Catalyzes the coordinated movement of the two tRNA molecules, the mRNA and conformational changes in the ribosome. The polypeptide is Elongation factor G (Chlorobaculum parvum (strain DSM 263 / NCIMB 8327) (Chlorobium vibrioforme subsp. thiosulfatophilum)).